Reading from the N-terminus, the 698-residue chain is Cytochrome c oxidase subunit 1 (698 aa).

A helical transmembrane segment spans residues 65–85 (INYLYFSMVTGLSGAALATMI). Glutamate 88 serves as a coordination point for Ca(2+). Histidine 111 provides a ligand contact to Fe(II)-heme a. Transmembrane regions (helical) follow at residues 113–133 (LIMV…NFLI), 147–167 (LNSI…KIGF), 304–324 (ILIL…TNLL), 349–369 (IFLT…AVIM), 395–415 (LFWF…FGFI), 434–454 (IWAI…HMYL), 468–488 (ITIM…LSLV), and 498–518 (FLFS…GMWL). A Cu cation-binding site is contributed by histidine 401. A cross-link (1'-histidyl-3'-tyrosine (His-Tyr)) is located at residues 401–405 (HPEVY). An O2-binding site is contributed by tyrosine 405. Histidine 450 and histidine 451 together coordinate Cu cation. Residues histidine 528 and aspartate 529 each coordinate Mg(2+). 3 consecutive transmembrane segments (helical) span residues 533-553 (VVAH…FSGF), 574-594 (LIYY…LGFS), and 613-633 (MSTA…LMIF). Histidine 536 contacts heme a3. Histidine 538 serves as a coordination point for Fe(II)-heme a.

This sequence belongs to the heme-copper respiratory oxidase family. In terms of assembly, component of the cytochrome c oxidase (complex IV, CIV), a multisubunit enzyme composed of a catalytic core of 3 subunits and several supernumerary subunits. The complex exists as a monomer or a dimer and forms supercomplexes (SCs) in the inner mitochondrial membrane with ubiquinol-cytochrome c oxidoreductase (cytochrome b-c1 complex, complex III, CIII). Requires heme as cofactor. The cofactor is Cu cation.

It localises to the mitochondrion inner membrane. The enzyme catalyses 4 Fe(II)-[cytochrome c] + O2 + 8 H(+)(in) = 4 Fe(III)-[cytochrome c] + 2 H2O + 4 H(+)(out). It functions in the pathway energy metabolism; oxidative phosphorylation. In terms of biological role, component of the cytochrome c oxidase, the last enzyme in the mitochondrial electron transport chain which drives oxidative phosphorylation. The respiratory chain contains 3 multisubunit complexes succinate dehydrogenase (complex II, CII), ubiquinol-cytochrome c oxidoreductase (cytochrome b-c1 complex, complex III, CIII) and cytochrome c oxidase (complex IV, CIV), that cooperate to transfer electrons derived from NADH and succinate to molecular oxygen, creating an electrochemical gradient over the inner membrane that drives transmembrane transport and the ATP synthase. Cytochrome c oxidase is the component of the respiratory chain that catalyzes the reduction of oxygen to water. Electrons originating from reduced cytochrome c in the intermembrane space (IMS) are transferred via the dinuclear copper A center (CU(A)) of subunit 2 and heme A of subunit 1 to the active site in subunit 1, a binuclear center (BNC) formed by heme A3 and copper B (CU(B)). The BNC reduces molecular oxygen to 2 water molecules using 4 electrons from cytochrome c in the IMS and 4 protons from the mitochondrial matrix. The protein is Cytochrome c oxidase subunit 1 (COI) of Tetrahymena pyriformis.